Here is a 260-residue protein sequence, read N- to C-terminus: Triosephosphate isomerase (260 aa).

Asn-11–Lys-13 is a substrate binding site. His-103 (electrophile) is an active-site residue. The active-site Proton acceptor is Glu-175. Residues Gly-181, Ser-220, and Gly-241–Gly-242 each bind substrate.

This sequence belongs to the triosephosphate isomerase family. In terms of assembly, homodimer.

The protein localises to the cytoplasm. The catalysed reaction is D-glyceraldehyde 3-phosphate = dihydroxyacetone phosphate. It participates in carbohydrate biosynthesis; gluconeogenesis. Its pathway is carbohydrate degradation; glycolysis; D-glyceraldehyde 3-phosphate from glycerone phosphate: step 1/1. Its function is as follows. Involved in the gluconeogenesis. Catalyzes stereospecifically the conversion of dihydroxyacetone phosphate (DHAP) to D-glyceraldehyde-3-phosphate (G3P). The protein is Triosephosphate isomerase of Shewanella loihica (strain ATCC BAA-1088 / PV-4).